Reading from the N-terminus, the 307-residue chain is Ubiquitin recognition factor in ER-associated degradation protein 1 (307 aa).

The residue at position 1 (M1) is an N-acetylmethionine. Phosphoserine is present on residues S129, S231, S245, S247, and S299. 2 disordered regions span residues 230 to 255 (GSGN…GDIK) and 288 to 307 (GRFI…GRKP).

Belongs to the UFD1 family. In terms of assembly, heterodimer with NPLOC4, this heterodimer binds VCP and inhibits Golgi membrane fusion. Interacts with USP13. Interacts with ZFAND2B; probably through VCP.

The protein localises to the nucleus. Its subcellular location is the cytoplasm. It is found in the cytosol. It participates in protein degradation; proteasomal ubiquitin-dependent pathway. Functionally, essential component of the ubiquitin-dependent proteolytic pathway which degrades ubiquitin fusion proteins. The ternary complex containing UFD1, VCP and NPLOC4 binds ubiquitinated proteins and is necessary for the export of misfolded proteins from the ER to the cytoplasm, where they are degraded by the proteasome. The NPLOC4-UFD1-VCP complex regulates spindle disassembly at the end of mitosis and is necessary for the formation of a closed nuclear envelope. It may be involved in the development of some ectoderm-derived structures. Acts as a negative regulator of type I interferon production via the complex formed with VCP and NPLOC4, which binds to RIGI and recruits RNF125 to promote ubiquitination and degradation of RIGI. The polypeptide is Ubiquitin recognition factor in ER-associated degradation protein 1 (Mus musculus (Mouse)).